The sequence spans 182 residues: Adenine phosphoribosyltransferase (182 aa).

Belongs to the purine/pyrimidine phosphoribosyltransferase family. In terms of assembly, homodimer.

The protein localises to the cytoplasm. It catalyses the reaction AMP + diphosphate = 5-phospho-alpha-D-ribose 1-diphosphate + adenine. It functions in the pathway purine metabolism; AMP biosynthesis via salvage pathway; AMP from adenine: step 1/1. Functionally, catalyzes a salvage reaction resulting in the formation of AMP, that is energically less costly than de novo synthesis. This chain is Adenine phosphoribosyltransferase, found in Campylobacter fetus subsp. fetus (strain 82-40).